The chain runs to 250 residues: PTB-containing, cubilin and LRP1-interacting protein (250 aa).

The region spanning V93–G250 is the PID domain. The disordered stretch occupies residues D229–G250. S236 and S247 each carry phosphoserine. The span at V241–G250 shows a compositional bias: acidic residues.

In terms of assembly, found in a complex with PID1/PCLI1, LRP1 and CUBNI. Interacts with LRP1 and CUBN. Expressed in subcutaneous fat, heart, skeletal muscle, brain, colon, thymus, spleen, kidney, liver, small intestine, placenta, lung and peripheral blood leukocyte.

The protein localises to the cytoplasm. In terms of biological role, increases proliferation of preadipocytes without affecting adipocytic differentiation. This is PTB-containing, cubilin and LRP1-interacting protein (PID1) from Homo sapiens (Human).